A 485-amino-acid polypeptide reads, in one-letter code: Cobyric acid synthase (485 aa).

A GATase cobBQ-type domain is found at 252–439 (KVRIAVPILP…VHGLFGDDRQ (188 aa)). C334 functions as the Nucleophile in the catalytic mechanism. The active site involves H431.

This sequence belongs to the CobB/CobQ family. CobQ subfamily.

It functions in the pathway cofactor biosynthesis; adenosylcobalamin biosynthesis. In terms of biological role, catalyzes amidations at positions B, D, E, and G on adenosylcobyrinic A,C-diamide. NH(2) groups are provided by glutamine, and one molecule of ATP is hydrogenolyzed for each amidation. This is Cobyric acid synthase from Azorhizobium caulinodans (strain ATCC 43989 / DSM 5975 / JCM 20966 / LMG 6465 / NBRC 14845 / NCIMB 13405 / ORS 571).